The primary structure comprises 584 residues: Actin-binding protein IPP (584 aa).

The 68-residue stretch at 37–104 folds into the BTB domain; sequence CDVQLQVGKE…IYTGVVNIAV (68 aa). Kelch repeat units follow at residues 296-343, 344-390, 391-437, 439-485, 487-533, and 535-583; these read YTRL…VVGG, MVYA…VCYG, AIYA…EMQG, IYAV…ALND, IYAI…TVNG, and LYVS…GVAV.

In terms of tissue distribution, expression seems confined to tissues derived from trophectoderm and primitive endoderm.

The protein localises to the cytoplasm. It localises to the cytoskeleton. Functionally, may play a role in organizing the actin cytoskeleton. The sequence is that of Actin-binding protein IPP (Ipp) from Mus musculus (Mouse).